Consider the following 69-residue polypeptide: Large ribosomal subunit protein uL29 (69 aa).

The protein belongs to the universal ribosomal protein uL29 family.

This Thermoanaerobacter pseudethanolicus (strain ATCC 33223 / 39E) (Clostridium thermohydrosulfuricum) protein is Large ribosomal subunit protein uL29.